The following is a 671-amino-acid chain: uncharacterized protein (671 aa).

Residues 39–56 (ATVTVVILLLILLLGWGY) form a helical membrane-spanning segment.

Its subcellular location is the membrane. This is an uncharacterized protein from Treponema pallidum (strain Nichols).